Here is a 633-residue protein sequence, read N- to C-terminus: Extracellular metalloproteinase 3 (633 aa).

The N-terminal stretch at 1–18 is a signal peptide; the sequence is MHGLLLAGLLALPMNVLA. Positions 19 to 246 are excised as a propeptide; sequence YPAEQHASNV…VHNVVDYVAS (228 aa). N-linked (GlcNAc...) asparagine glycosylation occurs at Asn-410. His-429 provides a ligand contact to Zn(2+). The active site involves Glu-430. His-433 is a binding site for Zn(2+). N-linked (GlcNAc...) asparagine glycosylation is found at Asn-480 and Asn-622.

The protein belongs to the peptidase M36 family. Zn(2+) serves as cofactor.

Its subcellular location is the secreted. Secreted metalloproteinase probably acting as a virulence factor. The chain is Extracellular metalloproteinase 3 (MEP3) from Trichophyton rubrum (Athlete's foot fungus).